The sequence spans 759 residues: Phosphoribosylformylglycinamidine synthase subunit PurL (759 aa).

H34 is a catalytic residue. Residue Y37 coordinates ATP. E95 contributes to the Mg(2+) binding site. Substrate is bound by residues S96–H99 and R118. H97 (proton acceptor) is an active-site residue. Mg(2+) is bound at residue D119. Residue Q243 participates in substrate binding. D271 serves as a coordination point for Mg(2+). E315–Q317 contributes to the substrate binding site. Residues D388 to V422 form a disordered region. 2 residues coordinate ATP: D520 and G557. Position 558 (N558) interacts with Mg(2+). S560 provides a ligand contact to substrate.

The protein belongs to the FGAMS family. As to quaternary structure, monomer. Part of the FGAM synthase complex composed of 1 PurL, 1 PurQ and 2 PurS subunits.

It is found in the cytoplasm. The enzyme catalyses N(2)-formyl-N(1)-(5-phospho-beta-D-ribosyl)glycinamide + L-glutamine + ATP + H2O = 2-formamido-N(1)-(5-O-phospho-beta-D-ribosyl)acetamidine + L-glutamate + ADP + phosphate + H(+). Its pathway is purine metabolism; IMP biosynthesis via de novo pathway; 5-amino-1-(5-phospho-D-ribosyl)imidazole from N(2)-formyl-N(1)-(5-phospho-D-ribosyl)glycinamide: step 1/2. Part of the phosphoribosylformylglycinamidine synthase complex involved in the purines biosynthetic pathway. Catalyzes the ATP-dependent conversion of formylglycinamide ribonucleotide (FGAR) and glutamine to yield formylglycinamidine ribonucleotide (FGAM) and glutamate. The FGAM synthase complex is composed of three subunits. PurQ produces an ammonia molecule by converting glutamine to glutamate. PurL transfers the ammonia molecule to FGAR to form FGAM in an ATP-dependent manner. PurS interacts with PurQ and PurL and is thought to assist in the transfer of the ammonia molecule from PurQ to PurL. This chain is Phosphoribosylformylglycinamidine synthase subunit PurL, found in Halorubrum lacusprofundi (strain ATCC 49239 / DSM 5036 / JCM 8891 / ACAM 34).